Here is a 359-residue protein sequence, read N- to C-terminus: Phosphate acyltransferase (359 aa).

Positions Leu-338–Ala-359 are disordered.

This sequence belongs to the PlsX family. Homodimer. Probably interacts with PlsY.

It localises to the cytoplasm. It carries out the reaction a fatty acyl-[ACP] + phosphate = an acyl phosphate + holo-[ACP]. The protein operates within lipid metabolism; phospholipid metabolism. Its function is as follows. Catalyzes the reversible formation of acyl-phosphate (acyl-PO(4)) from acyl-[acyl-carrier-protein] (acyl-ACP). This enzyme utilizes acyl-ACP as fatty acyl donor, but not acyl-CoA. The chain is Phosphate acyltransferase from Anaeromyxobacter sp. (strain Fw109-5).